The following is a 340-amino-acid chain: Ketol-acid reductoisomerase (NADP(+)) (340 aa).

The 182-residue stretch at 1-182 (MRVYYDRDCD…GGGRSGIIET (182 aa)) folds into the KARI N-terminal Rossmann domain. NADP(+) is bound by residues 24 to 27 (YGSQ), R48, S51, S53, and 83 to 86 (DELQ). H108 is a catalytic residue. Position 134 (G134) interacts with NADP(+). The 147-residue stretch at 183-329 (NFRQECETDL…EKLRGMMPWI (147 aa)) folds into the KARI C-terminal knotted domain. Positions 191, 195, 227, and 231 each coordinate Mg(2+). S252 lines the substrate pocket.

This sequence belongs to the ketol-acid reductoisomerase family. The cofactor is Mg(2+).

The enzyme catalyses (2R)-2,3-dihydroxy-3-methylbutanoate + NADP(+) = (2S)-2-acetolactate + NADPH + H(+). It catalyses the reaction (2R,3R)-2,3-dihydroxy-3-methylpentanoate + NADP(+) = (S)-2-ethyl-2-hydroxy-3-oxobutanoate + NADPH + H(+). It participates in amino-acid biosynthesis; L-isoleucine biosynthesis; L-isoleucine from 2-oxobutanoate: step 2/4. The protein operates within amino-acid biosynthesis; L-valine biosynthesis; L-valine from pyruvate: step 2/4. Its function is as follows. Involved in the biosynthesis of branched-chain amino acids (BCAA). Catalyzes an alkyl-migration followed by a ketol-acid reduction of (S)-2-acetolactate (S2AL) to yield (R)-2,3-dihydroxy-isovalerate. In the isomerase reaction, S2AL is rearranged via a Mg-dependent methyl migration to produce 3-hydroxy-3-methyl-2-ketobutyrate (HMKB). In the reductase reaction, this 2-ketoacid undergoes a metal-dependent reduction by NADPH to yield (R)-2,3-dihydroxy-isovalerate. The sequence is that of Ketol-acid reductoisomerase (NADP(+)) from Paracoccus denitrificans (strain Pd 1222).